We begin with the raw amino-acid sequence, 1877 residues long: Neuron navigator 1 (1877 aa).

Position 1 is an N-acetylmethionine (Met-1). The tract at residues 1-59 (MLGSSVKSVQPEVELSSGGGDEGADEPRGAGRKAAAADGRGMLPKRAKAPGGGGGMAKA) is disordered. Residues 32 to 41 (RKAAAADGRG) are compositionally biased toward low complexity. Phosphoserine is present on residues Ser-90, Ser-142, and Ser-152. The interval 114–225 (DMAKAPKGLG…PVPSAKGQEE (112 aa)) is disordered. Thr-159 is subject to Phosphothreonine. Phosphoserine occurs at positions 194 and 199. Over residues 205–214 (SSKAKAQKSS) the composition is skewed to low complexity. Residues 255–280 (ESQRKRTVQNVLDLRQNLEETMSSLR) adopt a coiled-coil conformation. A disordered region spans residues 294–336 (YDSDDANPRSVSSLSNRSSPLSWRYGQSSPRLQAGDAPSVGGS). Ser-296, Ser-308, Ser-312, Ser-362, and Ser-391 each carry phosphoserine. Low complexity predominate over residues 301–315 (PRSVSSLSNRSSPLS). Disordered stretches follow at residues 386–839 (KSGY…PLPS) and 892–989 (MSLP…PMSL). Composition is skewed to low complexity over residues 411–425 (DESS…DASD) and 433–448 (NASS…PTAS). 4 positions are modified to phosphoserine: Ser-452, Ser-474, Ser-476, and Ser-490. The segment covering 476–486 (SEEKAPKKLEY) has biased composition (basic and acidic residues). The span at 503–519 (ERPESCDDSSKGGELKK) shows a compositional bias: basic and acidic residues. At Ser-528 the chain carries Phosphoserine. Thr-534 is modified (phosphothreonine). A Phosphoserine modification is found at Ser-541. Position 544 is a phosphothreonine (Thr-544). Residues 555-566 (GKPEGKATDKGK) are compositionally biased toward basic and acidic residues. Thr-572 carries the phosphothreonine modification. Residues 581–591 (AGRDRLSDAKK) show a composition bias toward basic and acidic residues. Composition is skewed to polar residues over residues 615–635 (GTAT…QKSS) and 645–655 (RKTSLDVSNSA). Residue Ser-648 is modified to Phosphoserine. Arg-688 carries the post-translational modification Omega-N-methylarginine. 2 stretches are compositionally biased toward polar residues: residues 698–710 (IDPS…QGGL) and 724–733 (GRTTPAPVNQ). A coiled-coil region spans residues 731–756 (VNQTDREKEKAKAKAVALDSDNISLK). 5 positions are modified to phosphoserine: Ser-750, Ser-754, Ser-760, Ser-797, and Ser-808. The segment covering 751–773 (DNISLKSIGSPESTPKNQASHPT) has biased composition (polar residues). Residues 805–818 (NSNSLDLPSSSDTT) show a composition bias toward low complexity. The segment covering 902–913 (TPVPTPPAPPAA) has biased composition (pro residues). Residue Ser-1000 is modified to Phosphoserine. Thr-1006 carries the phosphothreonine modification. Residues 1072-1163 (SSAEERMQSE…SEAQAVIQGA (92 aa)) adopt a coiled-coil conformation. Position 1170 is a phosphothreonine (Thr-1170). 4 disordered regions span residues 1172–1204 (KELR…KDAD), 1244–1306 (ATPD…EKKE), 1359–1383 (LKVA…LSSP), and 1810–1843 (KLYH…SLDS). Ser-1181 bears the Phosphoserine mark. Residues 1181 to 1200 (SSDSISSLNSITSHSSIGSS) are compositionally biased toward low complexity. Residues 1246–1264 (PDSSAPSSPKLQHGSTETA) show a composition bias toward polar residues. At Ser-1265 the chain carries Phosphoserine. A compositionally biased stretch (low complexity) spans 1265-1275 (SPSIKSSTSSS). A coiled-coil region spans residues 1303 to 1362 (EKKEVSELRSELWEKEMKLTDIRLEALNSAHQLDQLRETMHNMQLEVDLLKAENDRLKVA). A compositionally biased stretch (polar residues) spans 1366–1383 (SSGSTPGQVPGSSALSSP). At Ser-1382 the chain carries Phosphoserine.

Belongs to the Nav/unc-53 family. Interacts with tubulin. As to expression, broadly expressed at low levels. Expressed at high levels in heart, skeletal muscle and placenta.

It localises to the cytoplasm. Its subcellular location is the cytoskeleton. May be involved in neuronal migration. This is Neuron navigator 1 (NAV1) from Homo sapiens (Human).